Here is a 164-residue protein sequence, read N- to C-terminus: Phosphopantetheine adenylyltransferase (164 aa).

S9 lines the substrate pocket. Residues 9–10 (SF) and H17 each bind ATP. Residues K41, V78, and R92 each coordinate substrate. ATP is bound by residues 93–95 (GLR), E103, and 128–134 (SRPITAT).

This sequence belongs to the bacterial CoaD family. As to quaternary structure, homohexamer. Mg(2+) is required as a cofactor.

It is found in the cytoplasm. It catalyses the reaction (R)-4'-phosphopantetheine + ATP + H(+) = 3'-dephospho-CoA + diphosphate. Its pathway is cofactor biosynthesis; coenzyme A biosynthesis; CoA from (R)-pantothenate: step 4/5. Its function is as follows. Reversibly transfers an adenylyl group from ATP to 4'-phosphopantetheine, yielding dephospho-CoA (dPCoA) and pyrophosphate. The chain is Phosphopantetheine adenylyltransferase from Rhizobium leguminosarum bv. trifolii (strain WSM2304).